The primary structure comprises 198 residues: Putative undecaprenyl-diphosphatase YbjG (198 aa).

Residues 1-27 (MLENLNLSLFSLINATPDSAPWMISLA) are Cytoplasmic-facing. The chain crosses the membrane as a helical span at residues 28–48 (IFIAKDLITVVPLLAVVLWLW). At 49 to 57 (GLTAQRQLV) the chain is on the periplasmic side. Residues 58–78 (IKIAIALAVSLFVSWTMGHLF) traverse the membrane as a helical segment. The Cytoplasmic segment spans residues 79–120 (PHDRPFVENIGYNFLHHAADDSFPSDHGTVIFTFALAFLCWH). Residues 121 to 143 (RLWSGSLLMVLAVVIAWSRVYLG) form a helical membrane-spanning segment. The Periplasmic segment spans residues 144–149 (VHWPLD). The chain crosses the membrane as a helical span at residues 150-172 (MLGGLLAGMIGCLSAQIIWQAMG). The Cytoplasmic portion of the chain corresponds to 173–198 (HKLYQRLQSWYRVCFALPIRKGWVRD).

It belongs to the BcrC/YbjG family.

It localises to the cell inner membrane. The catalysed reaction is di-trans,octa-cis-undecaprenyl diphosphate + H2O = di-trans,octa-cis-undecaprenyl phosphate + phosphate + H(+). Overexpression leads to increased undecaprenyl diphosphatase activity and to increased resistance to bacitracin. May have a preferred substrate other than undecaprenyl diphosphate in vivo. This Escherichia coli (strain K12) protein is Putative undecaprenyl-diphosphatase YbjG (ybjG).